The following is a 206-amino-acid chain: Oligoribonuclease (206 aa).

An Exonuclease domain is found at 20 to 183 (LVWLDMEMTG…ADIHESIDEL (164 aa)). Tyr141 is a catalytic residue.

This sequence belongs to the oligoribonuclease family.

It is found in the cytoplasm. In terms of biological role, 3'-to-5' exoribonuclease specific for small oligoribonucleotides. This Burkholderia cenocepacia (strain HI2424) protein is Oligoribonuclease.